Consider the following 83-residue polypeptide: Hainantoxin-III 4 (83 aa).

A signal peptide spans 1–21 (MKASMYLALAGLVLLFVVGYA). The propeptide occupies 22–48 (SESEEKEFPRELLSKIFAVDDFKGKER). 3 cysteine pairs are disulfide-bonded: C50–C65, C57–C70, and C64–C77. At L81 the chain carries Leucine amide.

Belongs to the neurotoxin 10 (Hwtx-1) family. 15 (Hntx-3) subfamily. As to quaternary structure, monomer. Expressed by the venom gland.

It localises to the secreted. Selective antagonist of neuronal tetrodotoxin (TTX)-sensitive voltage-gated sodium channels (IC(50)=1270 nM on Nav1.1/SCN1A, 270 nM on Nav1.2/SCN2A, 491 nM on Nav1.3/SCN3A and 232 nM on Nav1.7/SCN9A). This toxin suppress Nav1.7 current amplitude without significantly altering the activation, inactivation, and repriming kinetics. Short extreme depolarizations partially activate the toxin-bound channel, indicating voltage-dependent inhibition of this toxin. This toxin increases the deactivation of the Nav1.7 current after extreme depolarizations. The toxin-Nav1.7 complex is gradually dissociated upon prolonged strong depolarizations in a voltage-dependent manner, and the unbound toxin rebinds to Nav1.7 after a long repolarization. Moreover, analysis of chimeric channels showed that the DIIS3-S4 linker is critical for toxin binding to Nav1.7. These data are consistent with this toxin interacting with Nav1.7 site 4 and trapping the domain II voltage sensor in the closed state. The protein is Hainantoxin-III 4 of Cyriopagopus hainanus (Chinese bird spider).